The following is a 418-amino-acid chain: 1-acylglycerol-3-phosphate O-acyltransferase (418 aa).

The AB hydrolase-1 domain occupies Pro121–Asn251. Residues Gly197–Gly201 carry the GXSXG motif. An HXXXXD motif motif is present at residues His379 to Asp384.

Belongs to the peptidase S33 family. ABHD4/ABHD5 subfamily.

Its subcellular location is the cytoplasm. It carries out the reaction a 1-acyl-sn-glycero-3-phosphate + an acyl-CoA = a 1,2-diacyl-sn-glycero-3-phosphate + CoA. Lysophosphatidic acid acyltransferase which functions in phosphatidic acid biosynthesis. Is highly specific for lysophosphatidic acid and able to use different acyl-CoA donors. May regulate neutral lipid accumulation and participate in the regulation of lipid turnover in vegetative cells. Possesses additional triacylglycerol lipase and phospholipase A2 activities in vitro. Is not active as esterase or lysophospholipase. The polypeptide is 1-acylglycerol-3-phosphate O-acyltransferase (Arabidopsis thaliana (Mouse-ear cress)).